The primary structure comprises 77 residues: NAD(P)H-quinone oxidoreductase subunit L (77 aa).

2 helical membrane passes run 12–32 (LIAY…LLFY) and 47–67 (LGIY…SPFL).

This sequence belongs to the complex I NdhL subunit family. In terms of assembly, NDH-1 can be composed of about 15 different subunits; different subcomplexes with different compositions have been identified which probably have different functions.

It is found in the cellular thylakoid membrane. The enzyme catalyses a plastoquinone + NADH + (n+1) H(+)(in) = a plastoquinol + NAD(+) + n H(+)(out). It catalyses the reaction a plastoquinone + NADPH + (n+1) H(+)(in) = a plastoquinol + NADP(+) + n H(+)(out). In terms of biological role, NDH-1 shuttles electrons from an unknown electron donor, via FMN and iron-sulfur (Fe-S) centers, to quinones in the respiratory and/or the photosynthetic chain. The immediate electron acceptor for the enzyme in this species is believed to be plastoquinone. Couples the redox reaction to proton translocation, and thus conserves the redox energy in a proton gradient. Cyanobacterial NDH-1 also plays a role in inorganic carbon-concentration. The sequence is that of NAD(P)H-quinone oxidoreductase subunit L from Prochlorococcus marinus (strain AS9601).